A 345-amino-acid chain; its full sequence is S-adenosylmethionine:tRNA ribosyltransferase-isomerase (345 aa).

This sequence belongs to the QueA family. As to quaternary structure, monomer.

The protein localises to the cytoplasm. It catalyses the reaction 7-aminomethyl-7-carbaguanosine(34) in tRNA + S-adenosyl-L-methionine = epoxyqueuosine(34) in tRNA + adenine + L-methionine + 2 H(+). Its pathway is tRNA modification; tRNA-queuosine biosynthesis. Its function is as follows. Transfers and isomerizes the ribose moiety from AdoMet to the 7-aminomethyl group of 7-deazaguanine (preQ1-tRNA) to give epoxyqueuosine (oQ-tRNA). The chain is S-adenosylmethionine:tRNA ribosyltransferase-isomerase from Aromatoleum aromaticum (strain DSM 19018 / LMG 30748 / EbN1) (Azoarcus sp. (strain EbN1)).